A 75-amino-acid chain; its full sequence is Small ribosomal subunit protein bS18c (75 aa).

This sequence belongs to the bacterial ribosomal protein bS18 family. As to quaternary structure, part of the 30S ribosomal subunit.

It localises to the plastid. The protein resides in the chloroplast. This is Small ribosomal subunit protein bS18c from Psilotum nudum (Whisk fern).